The primary structure comprises 172 residues: R-phycocyanin-2 beta chain (172 aa).

Residue Asn-72 is modified to N4-methylasparagine. Residue Cys-82 coordinates (2R,3E)-phycocyanobilin. Cys-153 provides a ligand contact to (2R,3E)-phycoerythrobilin.

The protein belongs to the phycobiliprotein family. As to quaternary structure, heterodimer of an alpha and a beta chain. Contains two covalently linked bilin chromophores.

It is found in the cellular thylakoid membrane. Functionally, light-harvesting photosynthetic bile pigment-protein from the phycobiliprotein complex. This chain is R-phycocyanin-2 beta chain (rpcB), found in Synechococcus sp. (strain WH8103).